We begin with the raw amino-acid sequence, 503 residues long: Cytochrome P450 3A17 (503 aa).

Cysteine 442 provides a ligand contact to heme.

This sequence belongs to the cytochrome P450 family. It depends on heme as a cofactor.

It is found in the endoplasmic reticulum membrane. It localises to the microsome membrane. The catalysed reaction is an organic molecule + reduced [NADPH--hemoprotein reductase] + O2 = an alcohol + oxidized [NADPH--hemoprotein reductase] + H2O + H(+). Functionally, cytochromes P450 are a group of heme-thiolate monooxygenases. In liver microsomes, this enzyme is involved in an NADPH-dependent electron transport pathway. It oxidizes a variety of structurally unrelated compounds, including steroids, fatty acids, and xenobiotics. The chain is Cytochrome P450 3A17 (CYP3A17) from Cavia porcellus (Guinea pig).